The primary structure comprises 620 residues: Glutathione-regulated potassium-efflux system protein KefC (620 aa).

The next 12 helical transmembrane spans lie at histidine 4–valine 24, leucine 26–leucine 46, serine 54–leucine 74, glycine 90–leucine 110, valine 114–methionine 134, phenylalanine 149–leucine 169, methionine 178–leucine 198, valine 218–glycine 238, glycine 270–leucine 290, leucine 294–isoleucine 314, tryptophan 327–glutamine 347, and serine 359–asparagine 379. Residues glutamine 399–threonine 518 form the RCK N-terminal domain. Residues glycine 597–serine 620 are disordered.

The protein belongs to the monovalent cation:proton antiporter 2 (CPA2) transporter (TC 2.A.37) family. KefC subfamily. In terms of assembly, homodimer. Interacts with the regulatory subunit KefF.

Its subcellular location is the cell inner membrane. In terms of biological role, pore-forming subunit of a potassium efflux system that confers protection against electrophiles. Catalyzes K(+)/H(+) antiport. The protein is Glutathione-regulated potassium-efflux system protein KefC of Escherichia coli O7:K1 (strain IAI39 / ExPEC).